A 196-amino-acid chain; its full sequence is Pyridoxal 5'-phosphate synthase subunit PdxT (196 aa).

47-49 (GES) serves as a coordination point for L-glutamine. The active-site Nucleophile is Cys-79. L-glutamine contacts are provided by residues Arg-106 and 134–135 (IR). Active-site charge relay system residues include His-170 and Glu-172.

It belongs to the glutaminase PdxT/SNO family. As to quaternary structure, in the presence of PdxS, forms a dodecamer of heterodimers. Only shows activity in the heterodimer.

It carries out the reaction aldehydo-D-ribose 5-phosphate + D-glyceraldehyde 3-phosphate + L-glutamine = pyridoxal 5'-phosphate + L-glutamate + phosphate + 3 H2O + H(+). The enzyme catalyses L-glutamine + H2O = L-glutamate + NH4(+). The protein operates within cofactor biosynthesis; pyridoxal 5'-phosphate biosynthesis. Its function is as follows. Catalyzes the hydrolysis of glutamine to glutamate and ammonia as part of the biosynthesis of pyridoxal 5'-phosphate. The resulting ammonia molecule is channeled to the active site of PdxS. The sequence is that of Pyridoxal 5'-phosphate synthase subunit PdxT from Bacillus cereus (strain Q1).